Reading from the N-terminus, the 179-residue chain is ATP-dependent protease subunit HslV (179 aa).

Thr7 is an active-site residue. Residues Gly162, Cys165, and Thr168 each contribute to the Na(+) site.

This sequence belongs to the peptidase T1B family. HslV subfamily. A double ring-shaped homohexamer of HslV is capped on each side by a ring-shaped HslU homohexamer. The assembly of the HslU/HslV complex is dependent on binding of ATP.

It localises to the cytoplasm. It carries out the reaction ATP-dependent cleavage of peptide bonds with broad specificity.. Allosterically activated by HslU binding. Functionally, protease subunit of a proteasome-like degradation complex believed to be a general protein degrading machinery. The protein is ATP-dependent protease subunit HslV of Saccharophagus degradans (strain 2-40 / ATCC 43961 / DSM 17024).